The sequence spans 186 residues: Large ribosomal subunit protein uL5 (186 aa).

Belongs to the universal ribosomal protein uL5 family. As to quaternary structure, part of the 50S ribosomal subunit; part of the 5S rRNA/L5/L18/L25 subcomplex. Contacts the 5S rRNA and the P site tRNA. Forms a bridge to the 30S subunit in the 70S ribosome.

In terms of biological role, this is one of the proteins that bind and probably mediate the attachment of the 5S RNA into the large ribosomal subunit, where it forms part of the central protuberance. In the 70S ribosome it contacts protein S13 of the 30S subunit (bridge B1b), connecting the 2 subunits; this bridge is implicated in subunit movement. Contacts the P site tRNA; the 5S rRNA and some of its associated proteins might help stabilize positioning of ribosome-bound tRNAs. This Mycoplasmopsis synoviae (strain 53) (Mycoplasma synoviae) protein is Large ribosomal subunit protein uL5.